Here is a 174-residue protein sequence, read N- to C-terminus: MLTLIQGKKIVNYLRSRLAFEYNGQLIKILSKNIVAVGSLRREEKMLNDVDLLIIVPEKKCLKHVLPNIRIKGLSFSVKVCGERKCVLFIEWEKKTYQLDLFTALAEEKPYAIFHFTGPVSYLIRIRAALKKKNYKLNQYGLFKNQTLVPLKITTEKELIKELGFTYRIPKKRL.

Residues 42–51 (REEKMLNDVD) are involved in ssDNA binding. Positions 49 and 51 each coordinate Mg(2+). Cys-81 and Cys-86 are joined by a disulfide. Asp-100 contacts Mg(2+).

It belongs to the DNA polymerase type-X family. Mg(2+) serves as cofactor.

The protein resides in the virion. It carries out the reaction DNA(n) + a 2'-deoxyribonucleoside 5'-triphosphate = DNA(n+1) + diphosphate. Its function is as follows. Error-prone polymerase lacking a proofreading 3'-5' exonuclease which catalyzes the gap-filling reaction during the DNA repair process. Specifically binds intermediates in the single-nucleotide base-excision repair process. Also catalyzes DNA polymerization with low nucleotide-insertion fidelity. Probably acts as a strategic DNA mutase, which gives rise to a rapid emergence of variants. Generates mismatched G-G pairs, in that case, the polymerase first binds the deoxynucleotide followed by mismatch formation. Together with the viral DNA ligase, fills the single nucleotide gaps generated by the AP endonuclease. Binds DNA with high affinity via the helix alphaE. The polypeptide is Repair DNA polymerase X (African swine fever virus (isolate Tick/Malawi/Lil 20-1/1983) (ASFV)).